A 308-amino-acid chain; its full sequence is MIVSTLEHILTHISLSIVSILITIELRIFLDDEIKKLYDSSERGMLITFLCITGLLANNWIYLGHFPLSDLSESLIFLSWSFALIHSIGYFTKNLKFLSTITSQSTLFTQGFATSGILTKIQKSSILIPALKSEWLIMHVSLMILGYAALLCGSLLSVALMVITVRNDGKFFFKSNNFLFREISYQNKNFFYAINYYKTQLIKELDFWSYQVISLGFIFLTIGILSGAVWANEAWGSYWSWDPKETWAFITWIVFAIYLHTRININLQSTNSAIVASLGFIIIWICYFGVNLVGLGLHSYGSFPSTSN.

Helical transmembrane passes span 2–22 (IVST…SILI), 44–64 (GMLI…IYLG), 71–91 (LSES…IGYF), 143–163 (MILG…LMVI), 212–232 (VISL…VWAN), 247–267 (WAFI…NINL), and 273–293 (AIVA…VNLV).

Belongs to the CcmF/CycK/Ccl1/NrfE/CcsA family. As to quaternary structure, may interact with Ccs1.

The protein resides in the plastid membrane. In terms of biological role, required during biogenesis of c-type cytochromes (cytochrome c6 and cytochrome f) at the step of heme attachment. In Cuscuta reflexa (Southern Asian dodder), this protein is Cytochrome c biogenesis protein CcsA.